A 492-amino-acid chain; its full sequence is Adenosylhomocysteinase (492 aa).

Thr-68, Asp-153, and Glu-215 together coordinate substrate. 216 to 218 (TTT) lines the NAD(+) pocket. Residues Lys-245 and Asp-249 each contribute to the substrate site. Residues Asn-250, 279–284 (GYGDVG), Glu-302, Asn-337, 358–360 (IGH), and Asn-406 contribute to the NAD(+) site.

Belongs to the adenosylhomocysteinase family. Requires NAD(+) as cofactor.

It localises to the cytoplasm. It carries out the reaction S-adenosyl-L-homocysteine + H2O = L-homocysteine + adenosine. The protein operates within amino-acid biosynthesis; L-homocysteine biosynthesis; L-homocysteine from S-adenosyl-L-homocysteine: step 1/1. In terms of biological role, may play a key role in the regulation of the intracellular concentration of adenosylhomocysteine. This chain is Adenosylhomocysteinase, found in Mycobacterium marinum (strain ATCC BAA-535 / M).